A 210-amino-acid chain; its full sequence is Putative fructokinase-8 (210 aa).

Belongs to the carbohydrate kinase PfkB family.

It catalyses the reaction D-fructose + ATP = D-fructose 6-phosphate + ADP + H(+). The protein operates within glycan biosynthesis; starch biosynthesis. In terms of biological role, may play an important role in maintaining the flux of carbon towards starch formation. This is Putative fructokinase-8 from Arabidopsis thaliana (Mouse-ear cress).